We begin with the raw amino-acid sequence, 62 residues long: Large ribosomal subunit protein uL29 (62 aa).

Belongs to the universal ribosomal protein uL29 family.

This chain is Large ribosomal subunit protein uL29, found in Geotalea daltonii (strain DSM 22248 / JCM 15807 / FRC-32) (Geobacter daltonii).